Consider the following 759-residue polypeptide: Xaa-Pro dipeptidyl-peptidase (759 aa).

Catalysis depends on charge relay system residues Ser347, Asp467, and His497.

Belongs to the peptidase S15 family. Homodimer.

The protein resides in the cytoplasm. It carries out the reaction Hydrolyzes Xaa-Pro-|- bonds to release unblocked, N-terminal dipeptides from substrates including Ala-Pro-|-p-nitroanilide and (sequentially) Tyr-Pro-|-Phe-Pro-|-Gly-Pro-|-Ile.. Its function is as follows. Removes N-terminal dipeptides sequentially from polypeptides having unsubstituted N-termini provided that the penultimate residue is proline. This chain is Xaa-Pro dipeptidyl-peptidase, found in Streptococcus gordonii (strain Challis / ATCC 35105 / BCRC 15272 / CH1 / DL1 / V288).